The following is a 600-amino-acid chain: MMTRDELNIILPTLPEKPGCYQYFDEDGKVIYVGKAKNLRRRVSSYFYKEHADRKTRILVRQIRSIKYIVVDSEGDALLLENSLIKEYQPRYNVLLKDGKTYPSIVIKREPFPRIFATRDIKKDGSEYFGPYPGALIAKGMLRLVKEIYPIRTCKLDLREEKIRQGRYRVCLQYHIKKCKGPCIGNQTSNEYESNVSEIRDLLRGNLHRLVRMYRDRMQAYSEELRFEEAQICKERIELLERYEAKHTVVPRNIDNVDVFSYDEDEHTAYINYMHIEHGGINRVYTLEYRKQIEESKEELLAAAITELRQRFESNAHEIVLPFDTGWQTGESITTTIPRRGDKRKLLELSEKNVAQYKLDKLKRAEKLNPEQRALHIVHGIQKDLHLDRPPKHIECFDNSNIQGTSPVAACVVFKMGKPSKKDYRKFHVKTVEGPNDFASMREIISRHYTRLTEENLPLPDLIVVDGGKGQLSAAYETLDKLGLIGKIPIIGLAERLEEIFFPKDPVPLILDKKSETLKVIQHLRDEAHRFGIGFHRDVRSKKQIQSELDNIKGIGKKTKEDLLRHFKSVKRIRSAEEEELSALIGRNKAKLLYEGLRKK.

Positions 16 to 94 constitute a GIY-YIG domain; that stretch reads EKPGCYQYFD…IKEYQPRYNV (79 aa). Residues 208–243 enclose the UVR domain; sequence HRLVRMYRDRMQAYSEELRFEEAQICKERIELLERY.

It belongs to the UvrC family. In terms of assembly, interacts with UvrB in an incision complex.

It localises to the cytoplasm. The UvrABC repair system catalyzes the recognition and processing of DNA lesions. UvrC both incises the 5' and 3' sides of the lesion. The N-terminal half is responsible for the 3' incision and the C-terminal half is responsible for the 5' incision. This Porphyromonas gingivalis (strain ATCC 33277 / DSM 20709 / CIP 103683 / JCM 12257 / NCTC 11834 / 2561) protein is UvrABC system protein C.